Consider the following 325-residue polypeptide: Undecaprenyl-phosphate 4-deoxy-4-formamido-L-arabinose transferase (325 aa).

Transmembrane regions (helical) follow at residues 236–256 and 270–290; these read LSIF…LLIL and VFTL…GMGL.

The protein belongs to the glycosyltransferase 2 family.

The protein localises to the cell inner membrane. The enzyme catalyses UDP-4-deoxy-4-formamido-beta-L-arabinose + di-trans,octa-cis-undecaprenyl phosphate = 4-deoxy-4-formamido-alpha-L-arabinopyranosyl di-trans,octa-cis-undecaprenyl phosphate + UDP. Its pathway is glycolipid biosynthesis; 4-amino-4-deoxy-alpha-L-arabinose undecaprenyl phosphate biosynthesis; 4-amino-4-deoxy-alpha-L-arabinose undecaprenyl phosphate from UDP-4-deoxy-4-formamido-beta-L-arabinose and undecaprenyl phosphate: step 1/2. It functions in the pathway bacterial outer membrane biogenesis; lipopolysaccharide biosynthesis. Functionally, catalyzes the transfer of 4-deoxy-4-formamido-L-arabinose from UDP to undecaprenyl phosphate. The modified arabinose is attached to lipid A and is required for resistance to polymyxin and cationic antimicrobial peptides. This is Undecaprenyl-phosphate 4-deoxy-4-formamido-L-arabinose transferase from Edwardsiella ictaluri (strain 93-146).